We begin with the raw amino-acid sequence, 35 residues long: Cytochrome b6-f complex subunit 7 (35 aa).

A helical transmembrane segment spans residues 9–27 (AGLSIVLTLVGVALGYGIL).

Belongs to the PetM family. The 4 large subunits of the cytochrome b6-f complex are cytochrome b6, subunit IV (17 kDa polypeptide, PetD), cytochrome f and the Rieske protein, while the 4 small subunits are PetG, PetL, PetM and PetN. The complex functions as a dimer.

It is found in the cellular thylakoid membrane. In terms of biological role, component of the cytochrome b6-f complex, which mediates electron transfer between photosystem II (PSII) and photosystem I (PSI), cyclic electron flow around PSI, and state transitions. The sequence is that of Cytochrome b6-f complex subunit 7 from Synechococcus sp. (strain JA-3-3Ab) (Cyanobacteria bacterium Yellowstone A-Prime).